Reading from the N-terminus, the 191-residue chain is MLRIPRSLKSIINTINGESGTRYIVRGLIDGSLSALGVVIGASGSADASVIIAAGLGGGIANGLSNILGAFTAEKASLERERIQKEKSLLKKNGYLKKSIIYKKAIRETMICGLIDGISTTIGSALPVVPFFLFDIKTALYVAIGITIAILFILGVFIGKISKENVIISGIKMVAGALAVAILCFMIEKAF.

Transmembrane regions (helical) follow at residues 24-44 (IVRG…GASG), 51-71 (IIAA…LGAF), 114-134 (LIDG…FFLF), 139-159 (ALYV…VFIG), and 167-187 (IISG…CFMI).

The protein localises to the cell membrane. This is an uncharacterized protein from Methanocaldococcus jannaschii (strain ATCC 43067 / DSM 2661 / JAL-1 / JCM 10045 / NBRC 100440) (Methanococcus jannaschii).